The following is a 248-amino-acid chain: L-seryl-tRNA(Sec) kinase (248 aa).

Residue 7–14 (GLPGVGKS) participates in ATP binding.

This sequence belongs to the L-seryl-tRNA(Sec) kinase family.

The enzyme catalyses L-seryl-tRNA(Sec) + ATP = O-phospho-L-seryl-tRNA(Sec) + ADP. It functions in the pathway aminoacyl-tRNA biosynthesis; selenocysteinyl-tRNA(Sec) biosynthesis; selenocysteinyl-tRNA(Sec) from L-seryl-tRNA(Sec) (archaeal/eukaryal route): step 1/2. In terms of biological role, specifically phosphorylates seryl-tRNA(Sec) to O-phosphoseryl-tRNA(Sec), an activated intermediate for selenocysteine biosynthesis. This is L-seryl-tRNA(Sec) kinase (pstK) from Methanocaldococcus jannaschii (strain ATCC 43067 / DSM 2661 / JAL-1 / JCM 10045 / NBRC 100440) (Methanococcus jannaschii).